Consider the following 62-residue polypeptide: Phyllokinin-1 (62 aa).

The signal sequence occupies residues 1-19 (MSFLKKSLFLVLFLGLVSS). Residues 20–48 (SICEEEKRETEEEENEDEIEEESEEKKRE) constitute a propeptide that is removed on maturation. The interval 22–62 (CEEEKRETEEEENEDEIEEESEEKKREDPERPPGFTPFRVY) is disordered. A compositionally biased stretch (acidic residues) spans 30–42 (EEEENEDEIEEES). Residues 43 to 52 (EEKKREDPER) show a composition bias toward basic and acidic residues. Y62 carries the post-translational modification Sulfotyrosine; partial.

It belongs to the frog skin active peptide (FSAP) family. Bradykinin-related peptide subfamily. Asp,Pro,Glu-[Thr6,Val10]-phyllokinin and [Thr6,Val10]-phyllokinin occur in sulfated and nonsulfated forms. [Thr6]-bradykinin and Des-Arg-[Thr6]-bradykinin are nonsulfated. As to expression, expressed by the skin glands.

It localises to the secreted. Its function is as follows. Inhibits ACE with a Ki of 1.6 uM, and targets B2 bradykinin receptor (BDKRB2). Provokes contraction of smooth muscle preparation (ileum). In vivo, induces an early hyperalgesic effects in living rats after intraplantar injection. The protein is Phyllokinin-1 of Pithecopus azureus (Orange-legged monkey tree frog).